Consider the following 187-residue polypeptide: Transmembrane protein 17A (187 aa).

Transmembrane regions (helical) follow at residues 49–69, 82–102, 114–134, and 146–166; these read IFLY…VIML, FILV…LYLG, LAGF…FLLC, and AVHG…IFAL.

The protein belongs to the TMEM17 family. Part of the tectonic-like complex (also named B9 complex).

It is found in the cell projection. It localises to the cilium membrane. In terms of biological role, transmembrane component of the tectonic-like complex, a complex localized at the transition zone of primary cilia and acting as a barrier that prevents diffusion of transmembrane proteins between the cilia and plasma membranes. Required for ciliogenesis and sonic hedgehog/SHH signaling. This is Transmembrane protein 17A (tmem17-a) from Xenopus tropicalis (Western clawed frog).